Here is a 194-residue protein sequence, read N- to C-terminus: UPF0301 protein FTM_0963 (194 aa).

The protein belongs to the UPF0301 (AlgH) family.

This Francisella tularensis subsp. mediasiatica (strain FSC147) protein is UPF0301 protein FTM_0963.